The primary structure comprises 320 residues: Olfactory receptor 52W1 (320 aa).

Over 1–30 (MAETLQLNSTFLHPNFFILTGFPGLGSAQT) the chain is Extracellular. An N-linked (GlcNAc...) asparagine glycan is attached at Asn8. Residues 31 to 51 (WLTLVFGPIYLLALLGNGALP) traverse the membrane as a helical segment. Residues 52–59 (AVVWIDST) lie on the Cytoplasmic side of the membrane. A helical membrane pass occupies residues 60–80 (LHQPMFLLLAILAATDLGLAT). Residues 81–104 (SIAPGLLAVLWLGPRSVPYAVCLV) are Extracellular-facing. The chain crosses the membrane as a helical span at residues 105-125 (QMFFVHALTAMESGVLLAMAC). Residues 126-144 (DRAAAIGRPLHYPVLVTKA) are Cytoplasmic-facing. Residues 145–165 (CVGYAALALALKAVAIVVPFP) form a helical membrane-spanning segment. Topologically, residues 166–201 (LLVAKFEHFQAKTIGHTYCAHMAVVELVVGNTQATN) are extracellular. A helical transmembrane segment spans residues 202-222 (LYGLALSLAISGMDILGITGS). At 223–242 (YGLIAHAVLQLPTREAHAKA) the chain is on the cytoplasmic side. A helical membrane pass occupies residues 243 to 263 (FGTCSSHICVILAFYIPGLFS). The Extracellular segment spans residues 264–279 (YLTHRFGHHTVPKPVH). The chain crosses the membrane as a helical span at residues 280–300 (ILLSNIYLLLPPALNPLIYGA). Topologically, residues 301-320 (RTKQIRDRLLETFTFRKSPL) are cytoplasmic.

Belongs to the G-protein coupled receptor 1 family.

It is found in the cell membrane. Odorant receptor. The sequence is that of Olfactory receptor 52W1 (OR52W1) from Homo sapiens (Human).